The sequence spans 626 residues: DNA mismatch repair protein MutL (626 aa).

Disordered stretches follow at residues 385-413 and 418-437; these read SGAS…PSMV and LTPS…VAPD.

Belongs to the DNA mismatch repair MutL/HexB family.

In terms of biological role, this protein is involved in the repair of mismatches in DNA. It is required for dam-dependent methyl-directed DNA mismatch repair. May act as a 'molecular matchmaker', a protein that promotes the formation of a stable complex between two or more DNA-binding proteins in an ATP-dependent manner without itself being part of a final effector complex. In Chlorobaculum parvum (strain DSM 263 / NCIMB 8327) (Chlorobium vibrioforme subsp. thiosulfatophilum), this protein is DNA mismatch repair protein MutL.